Reading from the N-terminus, the 96-residue chain is Muconolactone Delta-isomerase (96 aa).

It belongs to the muconolactone Delta-isomerase family. As to quaternary structure, homodecamer.

It carries out the reaction (S)-muconolactone = (4,5-dihydro-5-oxofuran-2-yl)-acetate. It participates in aromatic compound metabolism; beta-ketoadipate pathway; 5-oxo-4,5-dihydro-2-furylacetate from catechol: step 3/3. The protein is Muconolactone Delta-isomerase (catC) of Acinetobacter baylyi (strain ATCC 33305 / BD413 / ADP1).